A 146-amino-acid polypeptide reads, in one-letter code: Large ribosomal subunit protein uL15 (146 aa).

Residues 1–51 form a disordered region; the sequence is MKLHELQPAPGSRKKAVRVGRGIGSGNGKTSGRGQKGQNARSGGGVRLGFE. Composition is skewed to gly residues over residues 21–35 and 42–51; these read RGIG…GRGQ and SGGGVRLGFE.

The protein belongs to the universal ribosomal protein uL15 family. Part of the 50S ribosomal subunit.

Functionally, binds to the 23S rRNA. This Geobacillus kaustophilus (strain HTA426) protein is Large ribosomal subunit protein uL15.